We begin with the raw amino-acid sequence, 389 residues long: Chalcone synthase 3 (389 aa).

C164 is an active-site residue.

The protein belongs to the thiolase-like superfamily. Chalcone/stilbene synthases family.

It catalyses the reaction (E)-4-coumaroyl-CoA + 3 malonyl-CoA + 3 H(+) = 2',4,4',6'-tetrahydroxychalcone + 3 CO2 + 4 CoA. It participates in secondary metabolite biosynthesis; flavonoid biosynthesis. In terms of biological role, the primary product of this enzyme is 4,2',4',6'-tetrahydroxychalcone (also termed naringenin-chalcone or chalcone) which can under specific conditions spontaneously isomerize into naringenin. This Camellia sinensis (Tea plant) protein is Chalcone synthase 3 (CHS3).